The chain runs to 793 residues: Lon protease 1 (793 aa).

In terms of domain architecture, Lon N-terminal spans 8-202 (VPVIPLKNSV…KLLDRLQELK (195 aa)). An ATP-binding site is contributed by 354-361 (GPPGVGKT). Residues 590 to 770 (LLPPGVVTGL…NEVLKITLGV (181 aa)) enclose the Lon proteolytic domain. Active-site residues include serine 676 and lysine 719.

It belongs to the peptidase S16 family. In terms of assembly, homohexamer. Organized in a ring with a central cavity.

It localises to the cytoplasm. It carries out the reaction Hydrolysis of proteins in presence of ATP.. Functionally, ATP-dependent serine protease that mediates the selective degradation of mutant and abnormal proteins as well as certain short-lived regulatory proteins. Required for cellular homeostasis and for survival from DNA damage and developmental changes induced by stress. Degrades polypeptides processively to yield small peptide fragments that are 5 to 10 amino acids long. Binds to DNA in a double-stranded, site-specific manner. The sequence is that of Lon protease 1 from Bdellovibrio bacteriovorus (strain ATCC 15356 / DSM 50701 / NCIMB 9529 / HD100).